The sequence spans 346 residues: DNA-directed RNA polymerase subunit alpha (346 aa).

Residues 1–243 (MTMNNPNLTM…EQLSIWVNFE (243 aa)) form an alpha N-terminal domain (alpha-NTD) region. Residues 260-346 (LNENLFRSVE…ERWKAQQAQA (87 aa)) form an alpha C-terminal domain (alpha-CTD) region.

It belongs to the RNA polymerase alpha chain family. Homodimer. The RNAP catalytic core consists of 2 alpha, 1 beta, 1 beta' and 1 omega subunit. When a sigma factor is associated with the core the holoenzyme is formed, which can initiate transcription.

It catalyses the reaction RNA(n) + a ribonucleoside 5'-triphosphate = RNA(n+1) + diphosphate. In terms of biological role, DNA-dependent RNA polymerase catalyzes the transcription of DNA into RNA using the four ribonucleoside triphosphates as substrates. The protein is DNA-directed RNA polymerase subunit alpha of Sorangium cellulosum (strain So ce56) (Polyangium cellulosum (strain So ce56)).